An 87-amino-acid chain; its full sequence is Toxin RelG (87 aa).

This sequence belongs to the RelE toxin family. Interacts with cognate antitoxin RelF, which neutralizes the toxin. Also interacts with non-cognate antitoxin RelB in vitro, in M.smegmatis this neutralizes the toxicity of this toxin.

Its function is as follows. Toxic component of a type II toxin-antitoxin (TA) system. Has RNase activity and preferentially cleaves at the 3'-end of purine ribonucleotides. Overexpression in M.tuberculosis or M.smegmatis inhibits colony formation in a bacteriostatic rather than bacteriocidal fashion. Its toxic effect is neutralized by coexpression with cognate antitoxin RelB2 (shown only for M.smegmatis). Overexpression also increases the number of gentamicin-tolerant and levofloxacin-tolerant persister cells. In terms of biological role, in combination with cognate antitoxin RelF represses its own promoter. Has been seen to bind DNA in complex with antitoxin RelF but not alone. The polypeptide is Toxin RelG (relG) (Mycobacterium tuberculosis (strain ATCC 25618 / H37Rv)).